The primary structure comprises 201 residues: Small ribosomal subunit protein uS4c (201 aa).

Residues 89-151 (MRLDNILFRL…QKSKTLIQNY (63 aa)) enclose the S4 RNA-binding domain.

The protein belongs to the universal ribosomal protein uS4 family. In terms of assembly, part of the 30S ribosomal subunit. Contacts protein S5. The interaction surface between S4 and S5 is involved in control of translational fidelity.

Its subcellular location is the plastid. The protein localises to the chloroplast. Functionally, one of the primary rRNA binding proteins, it binds directly to 16S rRNA where it nucleates assembly of the body of the 30S subunit. In terms of biological role, with S5 and S12 plays an important role in translational accuracy. The chain is Small ribosomal subunit protein uS4c (rps4) from Phaseolus vulgaris (Kidney bean).